The following is a 228-amino-acid chain: L-ribulose-5-phosphate 4-epimerase UlaF (228 aa).

Residues G26–N27, S43–G44, and S72–S73 contribute to the substrate site. Residues D74, H93, and H95 each coordinate Zn(2+). D118 functions as the Proton donor/acceptor in the catalytic mechanism. H167 provides a ligand contact to Zn(2+). Y225 acts as the Proton donor/acceptor in catalysis.

Belongs to the aldolase class II family. AraD/FucA subfamily. It depends on Zn(2+) as a cofactor.

It catalyses the reaction L-ribulose 5-phosphate = D-xylulose 5-phosphate. It participates in cofactor degradation; L-ascorbate degradation; D-xylulose 5-phosphate from L-ascorbate: step 4/4. Its function is as follows. Catalyzes the isomerization of L-ribulose 5-phosphate to D-xylulose 5-phosphate. Is involved in the anaerobic L-ascorbate utilization. This Shigella boydii serotype 18 (strain CDC 3083-94 / BS512) protein is L-ribulose-5-phosphate 4-epimerase UlaF.